The chain runs to 575 residues: Urease subunit alpha (575 aa).

The region spanning Gly-137–Phe-575 is the Urease domain. Ni(2+) contacts are provided by His-142, His-144, and Lys-225. Lys-225 is modified (N6-carboxylysine). Residue His-227 participates in substrate binding. Ni(2+)-binding residues include His-254 and His-280. The active-site Proton donor is the His-328. Residue Asp-368 participates in Ni(2+) binding.

Belongs to the metallo-dependent hydrolases superfamily. Urease alpha subunit family. Heterotrimer of UreA (gamma), UreB (beta) and UreC (alpha) subunits. Three heterotrimers associate to form the active enzyme. Ni cation is required as a cofactor. In terms of processing, carboxylation allows a single lysine to coordinate two nickel ions.

It is found in the cytoplasm. The enzyme catalyses urea + 2 H2O + H(+) = hydrogencarbonate + 2 NH4(+). It participates in nitrogen metabolism; urea degradation; CO(2) and NH(3) from urea (urease route): step 1/1. The protein is Urease subunit alpha of Leptothrix cholodnii (strain ATCC 51168 / LMG 8142 / SP-6) (Leptothrix discophora (strain SP-6)).